The sequence spans 1212 residues: Metabotropic glutamate receptor 5 (1212 aa).

A signal peptide spans 1 to 20 (MVLLLILSVLLLKEDVRGSA). At 22–580 (SSERRVVAHM…QYLRWGDPEP (559 aa)) the chain is on the extracellular side. Cysteine 57 and cysteine 99 form a disulfide bridge. An L-glutamate-binding site is contributed by tyrosine 64. N-linked (GlcNAc...) asparagine glycosylation occurs at asparagine 88. L-glutamate-binding positions include serine 152 and 173 to 175 (SAT). The N-linked (GlcNAc...) asparagine glycan is linked to asparagine 210. An L-glutamate-binding site is contributed by tyrosine 223. Cystine bridges form between cysteine 241–cysteine 530, cysteine 276–cysteine 278, cysteine 365–cysteine 381, cysteine 419–cysteine 426, cysteine 511–cysteine 531, cysteine 515–cysteine 534, cysteine 537–cysteine 549, and cysteine 552–cysteine 565. Aspartate 305 lines the L-glutamate pocket. Asparagine 378 and asparagine 382 each carry an N-linked (GlcNAc...) asparagine glycan. L-glutamate is bound at residue lysine 396. An N-linked (GlcNAc...) asparagine glycan is attached at asparagine 445. Residues 581–603 (IAAVVFACLGLLATLFVTVVFII) traverse the membrane as a helical segment. Residues 604 to 613 (YRDTPVVKSS) lie on the Cytoplasmic side of the membrane. A helical transmembrane segment spans residues 614-636 (SRELCYIILAGICLGYLCTFCLI). Topologically, residues 637–644 (AKPKQIYC) are extracellular. Cysteine 644 and cysteine 733 are oxidised to a cystine. A helical membrane pass occupies residues 645-667 (YLQRIGIGLSPAMSYSALVTKTN). The Cytoplasmic portion of the chain corresponds to 668–693 (RIARILAGSKKKICTKKPRFMSACAQ). Residues 694–714 (LVIAFILICIQLGIIVALFIM) traverse the membrane as a helical segment. At 715–737 (EPPDIMHDYPSIREVYLICNTTN) the chain is on the extracellular side. N-linked (GlcNAc...) asparagine glycosylation is present at asparagine 734. A helical transmembrane segment spans residues 738–759 (LGVVTPLGYNGLLILSCTFYAF). Residues 760–772 (KTRNVPANFNEAK) lie on the Cytoplasmic side of the membrane. Residues 773–795 (YIAFTMYTTCIIWLAFVPIYFGS) form a helical membrane-spanning segment. Over 796–798 (NYK) the chain is Extracellular. Residues 799–820 (IITMCFSVSLSATVALGCMFVP) traverse the membrane as a helical segment. At 821–1212 (KVYIILAKPE…RDYTQSSSSL (392 aa)) the chain is on the cytoplasmic side. A Phosphoserine modification is found at serine 861. Omega-N-methylarginine is present on residues arginine 869 and arginine 925. Disordered regions lie at residues 937–971 (INKKENPNQTAVIKPFPKSTESRGLGAGAGAGGSA), 1010–1056 (FPAP…SQGS), and 1132–1191 (GAQA…ALCI). A compositionally biased stretch (gly residues) spans 961–971 (LGAGAGAGGSA). 2 positions are modified to phosphoserine: serine 1018 and serine 1020. The span at 1132–1153 (GAQAAGDAARESPAAGPEAAAA) shows a compositional bias: low complexity. Polar residues predominate over residues 1174–1185 (DSGSTTPNSPVS).

This sequence belongs to the G-protein coupled receptor 3 family. In terms of assembly, the PPXXF motif binds HOMER1, HOMER2 and HOMER3. Interacts with SIAH1, RYR1, RYR2, ITPR1, SHANK1, SHANK3 and TAMALIN. Interacts with NCDN. Isoform 2 interacts with NECAB2. Interacts with CAMK2A.

Its subcellular location is the cell membrane. Functionally, G-protein coupled receptor for glutamate. Ligand binding causes a conformation change that triggers signaling via guanine nucleotide-binding proteins (G proteins) and modulates the activity of down-stream effectors. Signaling activates a phosphatidylinositol-calcium second messenger system and generates a calcium-activated chloride current. Plays an important role in the regulation of synaptic plasticity and the modulation of the neural network activity. The polypeptide is Metabotropic glutamate receptor 5 (GRM5) (Homo sapiens (Human)).